Consider the following 526-residue polypeptide: ATP synthase subunit alpha (526 aa).

G171–T178 provides a ligand contact to ATP.

Belongs to the ATPase alpha/beta chains family. F-type ATPases have 2 components, CF(1) - the catalytic core - and CF(0) - the membrane proton channel. CF(1) has five subunits: alpha(3), beta(3), gamma(1), delta(1), epsilon(1). CF(0) has four main subunits: a, b, b' and c.

Its subcellular location is the cell inner membrane. The catalysed reaction is ATP + H2O + 4 H(+)(in) = ADP + phosphate + 5 H(+)(out). Produces ATP from ADP in the presence of a proton gradient across the membrane. The alpha chain is a regulatory subunit. The protein is ATP synthase subunit alpha of Chlorobium limicola (strain DSM 245 / NBRC 103803 / 6330).